The chain runs to 279 residues: Energy-coupling factor transporter ATP-binding protein EcfA (279 aa).

One can recognise an ABC transporter domain in the interval Ile5–Asp240. An ATP-binding site is contributed by Gly40–Ser47.

It belongs to the ABC transporter superfamily. Energy-coupling factor EcfA family. Forms a stable energy-coupling factor (ECF) transporter complex composed of 2 membrane-embedded substrate-binding proteins (S component), 2 ATP-binding proteins (A component) and 2 transmembrane proteins (T component).

It localises to the cell membrane. ATP-binding (A) component of a common energy-coupling factor (ECF) ABC-transporter complex. Unlike classic ABC transporters this ECF transporter provides the energy necessary to transport a number of different substrates. This is Energy-coupling factor transporter ATP-binding protein EcfA from Enterococcus faecium (Streptococcus faecium).